Here is a 797-residue protein sequence, read N- to C-terminus: N-acetylneuraminate (7)9-O-acetyltransferase (797 aa).

At 1–18 (MAALAYNLGKREINHYFS) the chain is on the cytoplasmic side. The helical transmembrane segment at 19-39 (VRSAKVLALVAVLLLAACHLA) threads the bilayer. Topologically, residues 40 to 313 (SRRYRGNDSC…QPRPPVTLIQ (274 aa)) are lumenal. An N-linked (GlcNAc...) asparagine glycan is attached at asparagine 46. The active-site Acyl-ester intermediate is serine 94. 2 N-linked (GlcNAc...) asparagine glycosylation sites follow: asparagine 175 and asparagine 187. Residues aspartate 270 and histidine 273 contribute to the active site. The helical transmembrane segment at 314–334 (KLAACFFTLSIIGYLIFYIIH) threads the bilayer. The Cytoplasmic segment spans residues 335–363 (RNAHRKNKPCTDLESGEEKKNIINTPVSS). A helical membrane pass occupies residues 364–384 (LEILLQSFCKLGLIMAYFYMC). Over 385–395 (DRANLFMKENK) the chain is Lumenal. A helical transmembrane segment spans residues 396–416 (FYTHSSFFIPIIYILVLGVFY). Residues 417-439 (NENTKETKVLNREQTDEWKGWMQ) lie on the Cytoplasmic side of the membrane. Residues 440 to 460 (LVILIYHISGASTFLPVYMHI) form a helical membrane-spanning segment. Position 461 (arginine 461) is a topological domain, lumenal. Residues 462 to 482 (VLVAAYLFQTGYGHFSYFWIK) form a helical membrane-spanning segment. Residues 483–486 (GDFG) are Cytoplasmic-facing. Residues 487–507 (IYRVCQVLFRLNFLVVVLCIV) form a helical membrane-spanning segment. The Lumenal segment spans residues 508 to 513 (MDRPYQ). The chain crosses the membrane as a helical span at residues 514–534 (FYYFVPLVTVWFMVIYVTLAL). The Cytoplasmic portion of the chain corresponds to 535 to 547 (WPQIIQKKANGNC). Residues 548 to 568 (FWHFGLLLKLGFLLLFICFLA) form a helical membrane-spanning segment. Residues 569–605 (YSQGAFEKIFSLWPLSKCFELKGNVYEWWFRWRLDRY) lie on the Lumenal side of the membrane. Residues 606 to 626 (VVFHGMLFAFIYLALQKRQIL) traverse the membrane as a helical segment. The Cytoplasmic segment spans residues 627 to 638 (SEGKGEPLFSNK). A helical transmembrane segment spans residues 639-659 (ISNFLLFISVVSFLTYSIWAS). The Lumenal portion of the chain corresponds to 660-671 (SCKNKAECNELH). Residues 672–692 (PSVSVVQILAFILIRNIPGYA) traverse the membrane as a helical segment. Residues 693 to 698 (RSVYSS) are Cytoplasmic-facing. Residues 699–719 (FFAWFGKISLELFICQYHIWL) form a helical membrane-spanning segment. Topologically, residues 720-725 (AADTRG) are lumenal. A helical membrane pass occupies residues 726–746 (ILVLIPGNPMLNIIVSTFIFV). At 747–770 (CVAHEISQITNDLAQIIIPKDNSS) the chain is on the cytoplasmic side. A helical transmembrane segment spans residues 771–791 (LLKRLACIAAFFCGLLILSSI). At 792-797 (QDKSKH) the chain is on the lumenal side.

This sequence belongs to the PC-esterase family. CASD1 subfamily. In terms of processing, N-glycosylated. Highly expressed in peripheral B lymphocytes.

It is found in the golgi apparatus membrane. It catalyses the reaction CMP-N-acetyl-beta-neuraminate + acetyl-CoA = CMP-N-acetyl-9-O-acetyl-beta-neuraminate + CoA. The catalysed reaction is a ganglioside GD3 (d18:1(4E)) + acetyl-CoA = a ganglioside Ac-O-7-GD3(d18:1(4E)) + CoA. It carries out the reaction CMP-N-acetyl-beta-neuraminate + acetyl-CoA = CMP-N-acetyl-7-O-acetyl-beta-neuraminate + CoA. In terms of biological role, key enzyme in the biosynthesis of O-acetylated (O-Ac) sialoglycans such as gangliosides O-AcGD3 and O-AcGD2, which affect various processes such as cell-cell interactions, host-pathogen recognition. Catalyzes the transfer of an acetyl group from a donor, the acetyl-coenzyme-A molecule (acetyl-CoA), to the C7/8/9 OH-position of a sialic acid residue. The primary site of O-acetyl group transfer on sialic acid seems to depend on cell type and can be C7, from which the O-acetyl group could subsequently migrate to the C8 and then to the C9 position, or at C9 with possibility of migrating to the C8 and then to the C7 position. Together with ST8SIA1 (GD3 synthase) it increases the levels of ganglioside Ac-O-7-GD3. Can transfer the acetyl group from acetyl-CoA to free sialate (N-acetylneuraminate, Neu5Ac) in vitro, but has preferred substrate specificity for CMP-activated sialate (CMP-Neu5Ac), resulting in the formation of 9-O-acetylated CMP-Neu5Ac (CMP-Neu5,9Ac2). CMP-Neu5,9Ac2 may be used by sialyltransferases as a sialate donor for glycoconjugate acceptors such as ganglioside GD3. O-acetylation at position C9 of ganglioside GD3 can counteract the pro-apoptotic effects of the ganglioside GD3 in tumor cells. This chain is N-acetylneuraminate (7)9-O-acetyltransferase, found in Homo sapiens (Human).